Consider the following 156-residue polypeptide: Eosinophil cationic-type ribonuclease 3 (156 aa).

A signal peptide spans Met1–Cys25. Residue His38 is the Proton acceptor of the active site. Asn41 carries N-linked (GlcNAc...) asparagine glycosylation. 4 disulfide bridges follow: Cys47/Cys106, Cys61/Cys119, Cys79/Cys134, and Cys86/Cys94. Lys62–Thr66 provides a ligand contact to substrate. Residues Asn89, Asn96, and Asn107 are each glycosylated (N-linked (GlcNAc...) asparagine). His151 (proton donor) is an active-site residue.

It belongs to the pancreatic ribonuclease family.

The polypeptide is Eosinophil cationic-type ribonuclease 3 (Ear3) (Mus musculus (Mouse)).